The following is a 54-amino-acid chain: UPF0057 membrane protein ssr1169 (54 aa).

2 consecutive transmembrane segments (helical) span residues 3-23 (IVKI…QVGI) and 31-51 (LLLT…WVIA).

The protein belongs to the UPF0057 (PMP3) family.

It localises to the cell membrane. In Synechocystis sp. (strain ATCC 27184 / PCC 6803 / Kazusa), this protein is UPF0057 membrane protein ssr1169.